A 371-amino-acid polypeptide reads, in one-letter code: tRNA-specific 2-thiouridylase MnmA (371 aa).

Residues 13-20 (GMSGGVDS) and Met-39 each bind ATP. Residues 99–101 (NPD) are interaction with target base in tRNA. Residue Cys-104 is the Nucleophile of the active site. An intrachain disulfide couples Cys-104 to Cys-200. Gly-128 contributes to the ATP binding site. The segment at 150–152 (KDQ) is interaction with tRNA. Cys-200 (cysteine persulfide intermediate) is an active-site residue. An interaction with tRNA region spans residues 308–309 (RY).

Belongs to the MnmA/TRMU family.

Its subcellular location is the cytoplasm. The catalysed reaction is S-sulfanyl-L-cysteinyl-[protein] + uridine(34) in tRNA + AH2 + ATP = 2-thiouridine(34) in tRNA + L-cysteinyl-[protein] + A + AMP + diphosphate + H(+). In terms of biological role, catalyzes the 2-thiolation of uridine at the wobble position (U34) of tRNA, leading to the formation of s(2)U34. In Listeria welshimeri serovar 6b (strain ATCC 35897 / DSM 20650 / CCUG 15529 / CIP 8149 / NCTC 11857 / SLCC 5334 / V8), this protein is tRNA-specific 2-thiouridylase MnmA.